The following is a 233-amino-acid chain: 2,3,4,5-tetrahydropyridine-2,6-dicarboxylate N-acetyltransferase (233 aa).

This sequence belongs to the transferase hexapeptide repeat family. DapH subfamily.

It carries out the reaction (S)-2,3,4,5-tetrahydrodipicolinate + acetyl-CoA + H2O = L-2-acetamido-6-oxoheptanedioate + CoA. Its pathway is amino-acid biosynthesis; L-lysine biosynthesis via DAP pathway; LL-2,6-diaminopimelate from (S)-tetrahydrodipicolinate (acetylase route): step 1/3. Catalyzes the transfer of an acetyl group from acetyl-CoA to tetrahydrodipicolinate. This is 2,3,4,5-tetrahydropyridine-2,6-dicarboxylate N-acetyltransferase from Enterococcus faecalis (strain ATCC 700802 / V583).